A 308-amino-acid polypeptide reads, in one-letter code: Elongation factor Ts (308 aa).

The tract at residues 80–83 (TDFV) is involved in Mg(2+) ion dislocation from EF-Tu.

It belongs to the EF-Ts family.

Its subcellular location is the cytoplasm. Its function is as follows. Associates with the EF-Tu.GDP complex and induces the exchange of GDP to GTP. It remains bound to the aminoacyl-tRNA.EF-Tu.GTP complex up to the GTP hydrolysis stage on the ribosome. This Allorhizobium ampelinum (strain ATCC BAA-846 / DSM 112012 / S4) (Agrobacterium vitis (strain S4)) protein is Elongation factor Ts.